Here is a 987-residue protein sequence, read N- to C-terminus: Rho GTPase-activating protein 6 (987 aa).

Residues 1-21 (MSAQSLLHSVFSCSSPASGGT) show a composition bias toward polar residues. 3 disordered regions span residues 1 to 60 (MSAQ…RGST), 76 to 117 (SRLA…SGSF), and 144 to 170 (GSGS…IFSS). Ser37 is subject to Phosphoserine. A compositionally biased stretch (gly residues) spans 44-57 (GGCGSEMGAEGGLR). The span at 100-115 (SSFSTPSTPQEKSPSG) shows a compositional bias: polar residues. A compositionally biased stretch (low complexity) spans 144 to 159 (GSGSASSRSPASILSS). Ser265 carries the phosphoserine modification. The segment at 324–363 (KQNKELSSSNSSLSSTSETPNESTSPNTPEPAPRARRRGA) is disordered. The segment covering 328 to 350 (ELSSSNSSLSSTSETPNESTSPN) has biased composition (low complexity). Positions 344-354 (NESTSPNTPEP) match the SH3-binding motif. The residue at position 365 (Ser365) is a Phosphoserine. One can recognise a Rho-GAP domain in the interval 403–604 (LSLNPIYRQV…KMIENYEALF (202 aa)). A disordered region spans residues 641-676 (DILQTEVSFSMGGRHSSTDSNKASSGDISPYDNNSP). Positions 658-676 (TDSNKASSGDISPYDNNSP) are enriched in polar residues. Phosphoserine occurs at positions 669, 675, 682, 713, 758, 776, 781, 790, and 824. The tract at residues 709–731 (GHLSSPKSKSRESSPGPRLGKEM) is disordered. Disordered stretches follow at residues 825-847 (TPHI…PFLS) and 863-953 (WLQS…QDKQ). Residues 939 to 948 (LSSAYSLSAS) are compositionally biased toward low complexity. Ser941 and Ser944 each carry phosphoserine.

In terms of tissue distribution, expressed in retina and lung.

Its subcellular location is the cytoplasm. Functionally, GTPase activator for the Rho-type GTPases by converting them to an inactive GDP-bound state. Could regulate the interactions of signaling molecules with the actin cytoskeleton. Promotes continuous elongation of cytoplasmic processes during cell motility and simultaneous retraction of the cell body changing the cell morphology. In Mus musculus (Mouse), this protein is Rho GTPase-activating protein 6 (Arhgap6).